Consider the following 378-residue polypeptide: Mannitol-1-phosphate 5-dehydrogenase (378 aa).

4 to 15 serves as a coordination point for NAD(+); the sequence is SVHFGAGNIGRG.

This sequence belongs to the mannitol dehydrogenase family.

It carries out the reaction D-mannitol 1-phosphate + NAD(+) = beta-D-fructose 6-phosphate + NADH + H(+). This chain is Mannitol-1-phosphate 5-dehydrogenase, found in Streptococcus pneumoniae serotype 4 (strain ATCC BAA-334 / TIGR4).